A 156-amino-acid chain; its full sequence is Small ribosomal subunit protein uS7 (156 aa).

It belongs to the universal ribosomal protein uS7 family. As to quaternary structure, part of the 30S ribosomal subunit. Contacts proteins S9 and S11.

Its function is as follows. One of the primary rRNA binding proteins, it binds directly to 16S rRNA where it nucleates assembly of the head domain of the 30S subunit. Is located at the subunit interface close to the decoding center, probably blocks exit of the E-site tRNA. This chain is Small ribosomal subunit protein uS7, found in Mycobacterium ulcerans (strain Agy99).